A 203-amino-acid polypeptide reads, in one-letter code: Large ribosomal subunit protein uL18 (203 aa).

Belongs to the universal ribosomal protein uL18 family. As to quaternary structure, part of the 50S ribosomal subunit. Contacts the 5S and 23S rRNAs.

Its function is as follows. This is one of the proteins that bind and probably mediate the attachment of the 5S RNA into the large ribosomal subunit, where it forms part of the central protuberance. The chain is Large ribosomal subunit protein uL18 from Pyrococcus horikoshii (strain ATCC 700860 / DSM 12428 / JCM 9974 / NBRC 100139 / OT-3).